Here is a 485-residue protein sequence, read N- to C-terminus: D-alanine--D-alanyl carrier protein ligase (485 aa).

144 to 145 (TS) provides a ligand contact to ATP. Asp-189 contacts D-alanine. Position 284–289 (284–289 (NTYGPT)) interacts with ATP. Residue Val-293 participates in D-alanine binding. Asp-365 and Lys-473 together coordinate ATP. Lys-473 contributes to the D-alanine binding site.

The protein belongs to the ATP-dependent AMP-binding enzyme family. DltA subfamily.

Its subcellular location is the cytoplasm. It catalyses the reaction holo-[D-alanyl-carrier protein] + D-alanine + ATP = D-alanyl-[D-alanyl-carrier protein] + AMP + diphosphate. The protein operates within cell wall biogenesis; lipoteichoic acid biosynthesis. Its function is as follows. Catalyzes the first step in the D-alanylation of lipoteichoic acid (LTA), the activation of D-alanine and its transfer onto the D-alanyl carrier protein (Dcp) DltC. In an ATP-dependent two-step reaction, forms a high energy D-alanyl-AMP intermediate, followed by transfer of the D-alanyl residue as a thiol ester to the phosphopantheinyl prosthetic group of the Dcp. D-alanylation of LTA plays an important role in modulating the properties of the cell wall in Gram-positive bacteria, influencing the net charge of the cell wall. In Staphylococcus epidermidis (strain ATCC 35984 / DSM 28319 / BCRC 17069 / CCUG 31568 / BM 3577 / RP62A), this protein is D-alanine--D-alanyl carrier protein ligase.